The chain runs to 302 residues: Pantothenate synthetase 4 (302 aa).

51-58 (MGALHEGH) lines the ATP pocket. The active-site Proton donor is H58. Position 82 (Q82) interacts with (R)-pantoate. Residue Q82 participates in beta-alanine binding. Position 166–169 (166–169 (GRKD)) interacts with ATP. Q172 contacts (R)-pantoate. Residues A195 and 203–206 (RSSR) contribute to the ATP site.

The protein belongs to the pantothenate synthetase family. Homodimer.

Its subcellular location is the cytoplasm. The enzyme catalyses (R)-pantoate + beta-alanine + ATP = (R)-pantothenate + AMP + diphosphate + H(+). It participates in cofactor biosynthesis; (R)-pantothenate biosynthesis; (R)-pantothenate from (R)-pantoate and beta-alanine: step 1/1. In terms of biological role, catalyzes the condensation of pantoate with beta-alanine in an ATP-dependent reaction via a pantoyl-adenylate intermediate. This is Pantothenate synthetase 4 from Frankia alni (strain DSM 45986 / CECT 9034 / ACN14a).